The primary structure comprises 94 residues: Core protein OPG142 (94 aa).

The protein belongs to the orthopoxvirus OPG142 family. As to quaternary structure, part of a complex composed of the kinase OPG054, OPG092, OPG100, OPG114, OPG115, OPG142 and OPG157.

The protein localises to the host cytoplasm. Its subcellular location is the virion. In terms of biological role, late protein which is a part of a large complex required for early virion morphogenesis. This complex participates in the formation of virosomes and the incorporation of virosomal contents into nascent immature virions. Required for the stability and kinase activity of OPG054. The chain is Core protein OPG142 (OPG142) from Cynomys gunnisoni (Gunnison's prairie dog).